We begin with the raw amino-acid sequence, 272 residues long: MSETDMKLVVVGAAGRMGQTLIRTVHEAAGVRLHAAIERSNSPFIGRDAGELAGLGPIGVPITDKPLEAFVEAEGVLDFTAPAGTVEFAGLAAQARIVHVIGTTGCSADDEAKIRAAARHARVVKSGNMSLGVNLLGVLTETAARALSAKDWDIEILEMHHRHKVDAPSGTALLLGEAAAKGRGIDLADQAVKVRDGHTGPRPQGTIGFATLRGGLVVGEHSVILAGEGELVTLSHSATDRSIFARGAVAAALWGRSQKPGFYTMLDVLGLN.

NAD(+) contacts are provided by residues 12–17 (GAAGRM) and glutamate 38. Arginine 39 serves as a coordination point for NADP(+). Residues 102 to 104 (GTT) and 126 to 129 (SGNM) each bind NAD(+). Histidine 160 serves as the catalytic Proton donor/acceptor. (S)-2,3,4,5-tetrahydrodipicolinate is bound at residue histidine 161. Lysine 164 acts as the Proton donor in catalysis. 170 to 171 (GT) serves as a coordination point for (S)-2,3,4,5-tetrahydrodipicolinate.

It belongs to the DapB family.

Its subcellular location is the cytoplasm. It carries out the reaction (S)-2,3,4,5-tetrahydrodipicolinate + NAD(+) + H2O = (2S,4S)-4-hydroxy-2,3,4,5-tetrahydrodipicolinate + NADH + H(+). The enzyme catalyses (S)-2,3,4,5-tetrahydrodipicolinate + NADP(+) + H2O = (2S,4S)-4-hydroxy-2,3,4,5-tetrahydrodipicolinate + NADPH + H(+). The protein operates within amino-acid biosynthesis; L-lysine biosynthesis via DAP pathway; (S)-tetrahydrodipicolinate from L-aspartate: step 4/4. Catalyzes the conversion of 4-hydroxy-tetrahydrodipicolinate (HTPA) to tetrahydrodipicolinate. The protein is 4-hydroxy-tetrahydrodipicolinate reductase of Sinorhizobium fredii (strain NBRC 101917 / NGR234).